Consider the following 550-residue polypeptide: Probable acyl-activating enzyme 6 (550 aa).

Belongs to the ATP-dependent AMP-binding enzyme family. In terms of tissue distribution, expressed at low levels in roots, leaves, stems and developing seeds.

In terms of biological role, may act as an acid--thiol ligase that activates carboxylic acids by forming acyl-CoAs. This chain is Probable acyl-activating enzyme 6 (AAE6), found in Arabidopsis thaliana (Mouse-ear cress).